The following is a 489-amino-acid chain: F-box/LRR-repeat protein 7 (489 aa).

Over residues 1–31 the composition is skewed to low complexity; the sequence is MGANNGKQSGSEGKGSSSISSDLSSSTDQTS. The interval 1-76 is disordered; sequence MGANNGKQSG…AVLNGSSTSS (76 aa). Residues 32–55 are compositionally biased toward polar residues; sequence TKAPKNAATSEDSDLSMRTVSTPS. Residues 64–76 are compositionally biased toward low complexity; sequence SSSAVLNGSSTSS. In terms of domain architecture, F-box spans 109 to 155; the sequence is GAPVDILPDHAFLQIFTHLPTNQLCRCARVCRRWYNLAWDPRLWRTI. LRR repeat units lie at residues 168-193, 194-219, 220-245, 251-279, 280-305, 306-331, 332-357, 358-383, 384-409, 410-435, and 436-461; these read LRVL…MVSG, CRRL…EVAG, CYNV…DVSG, CISL…DMTD, CFAL…YLRR, CVRL…SVSD, CRFI…SIAH, CSRI…NARG, CEGL…DIGK, CPLV…SLKS, and CESI…NVQD.

It belongs to the FBXL7 family. In terms of assembly, part of the SCF (SKP1-CUL1-F-box) E3 ubiquitin-protein ligase complex SCF(FBXL7).

The protein localises to the cytoplasm. It localises to the cytoskeleton. It is found in the microtubule organizing center. The protein resides in the centrosome. It functions in the pathway protein modification; protein ubiquitination. In terms of biological role, substrate recognition component of a SCF (SKP1-CUL1-F-box protein) E3 ubiquitin-protein ligase complex which mediates the ubiquitination and subsequent proteasomal degradation of target proteins. This Danio rerio (Zebrafish) protein is F-box/LRR-repeat protein 7 (fbxl7).